We begin with the raw amino-acid sequence, 259 residues long: tRNA pseudouridine synthase A (259 aa).

Asp-52 acts as the Nucleophile in catalysis. Tyr-113 is a substrate binding site.

It belongs to the tRNA pseudouridine synthase TruA family. As to quaternary structure, homodimer.

It carries out the reaction uridine(38/39/40) in tRNA = pseudouridine(38/39/40) in tRNA. Its function is as follows. Formation of pseudouridine at positions 38, 39 and 40 in the anticodon stem and loop of transfer RNAs. The polypeptide is tRNA pseudouridine synthase A (Allorhizobium ampelinum (strain ATCC BAA-846 / DSM 112012 / S4) (Agrobacterium vitis (strain S4))).